The primary structure comprises 257 residues: Probable septum site-determining protein MinC (257 aa).

Over residues 123 to 141 (AVEAAAAPAAEPTPEPGAA) the composition is skewed to low complexity. Residues 123-144 (AVEAAAAPAAEPTPEPGAASQP) form a disordered region.

The protein belongs to the MinC family. As to quaternary structure, interacts with MinD and FtsZ.

Cell division inhibitor that blocks the formation of polar Z ring septums. Rapidly oscillates between the poles of the cell to destabilize FtsZ filaments that have formed before they mature into polar Z rings. Prevents FtsZ polymerization. This chain is Probable septum site-determining protein MinC, found in Burkholderia multivorans (strain ATCC 17616 / 249).